Here is a 282-residue protein sequence, read N- to C-terminus: 4-diphosphocytidyl-2-C-methyl-D-erythritol kinase (282 aa).

K9 is a catalytic residue. ATP is bound at residue 98–108 (PMGGGLGGGSS). D140 is an active-site residue.

Belongs to the GHMP kinase family. IspE subfamily. As to quaternary structure, homodimer.

It carries out the reaction 4-CDP-2-C-methyl-D-erythritol + ATP = 4-CDP-2-C-methyl-D-erythritol 2-phosphate + ADP + H(+). Its pathway is isoprenoid biosynthesis; isopentenyl diphosphate biosynthesis via DXP pathway; isopentenyl diphosphate from 1-deoxy-D-xylulose 5-phosphate: step 3/6. In terms of biological role, catalyzes the phosphorylation of the position 2 hydroxy group of 4-diphosphocytidyl-2C-methyl-D-erythritol. The chain is 4-diphosphocytidyl-2-C-methyl-D-erythritol kinase from Salmonella heidelberg (strain SL476).